A 1040-amino-acid chain; its full sequence is DIS3-like exonuclease 1 (1040 aa).

The CSD1 domain maps to A232–N310. One can recognise a CSD2 domain in the interval V360–N426. Residues R459–N808 form the RNB domain.

The protein belongs to the RNR ribonuclease family. Component of the RNA exosome complex. Mg(2+) serves as cofactor.

It localises to the cytoplasm. It carries out the reaction Exonucleolytic cleavage in the 3'- to 5'-direction to yield nucleoside 5'-phosphates.. Its function is as follows. Catalytic component of the RNA exosome complex which has 3'-&gt;5' exoribonuclease activity and participates in a multitude of cellular RNA processing and degradation events. The chain is DIS3-like exonuclease 1 (dis3l) from Xenopus laevis (African clawed frog).